Consider the following 258-residue polypeptide: Small ribosomal subunit protein uS2 (258 aa).

The segment at 227–258 (GEQFAPASEQKEEVKTQEVQEVEDSNDDVIDD) is disordered. The segment covering 235–244 (EQKEEVKTQE) has biased composition (basic and acidic residues). Residues 246–258 (QEVEDSNDDVIDD) show a composition bias toward acidic residues.

This sequence belongs to the universal ribosomal protein uS2 family.

The sequence is that of Small ribosomal subunit protein uS2 from Caldicellulosiruptor saccharolyticus (strain ATCC 43494 / DSM 8903 / Tp8T 6331).